We begin with the raw amino-acid sequence, 450 residues long: NADP-specific glutamate dehydrogenase (450 aa).

The active site involves K111.

It belongs to the Glu/Leu/Phe/Val dehydrogenases family. In terms of assembly, homohexamer.

The enzyme catalyses L-glutamate + NADP(+) + H2O = 2-oxoglutarate + NH4(+) + NADPH + H(+). This Hebeloma cylindrosporum protein is NADP-specific glutamate dehydrogenase.